A 424-amino-acid chain; its full sequence is UDP-sugar transporter protein SLC35A5 (424 aa).

Residues 1 to 8 are Cytoplasmic-facing; the sequence is MEKQCCSH. A helical transmembrane segment spans residues 9-29; sequence PVICSLSTMYTFLLGAIFIAL. Over 30 to 53 the chain is Lumenal; it reads SSSRILLVKYSANEENKYDYLPTT. The helical transmembrane segment at 54-74 threads the bilayer; that stretch reads ANVCSELVKLVFCVLVSFCVI. The Cytoplasmic segment spans residues 75–93; that stretch reads KKDHQSRNLKYASWKEFSN. Residues 94 to 116 traverse the membrane as a helical segment; that stretch reads FMKWSIPAFLYFLDNLIVFYVLS. Residues 117-119 lie on the Lumenal side of the membrane; sequence YLQ. Residues 120 to 142 traverse the membrane as a helical segment; the sequence is PAMAVIFSNFSIITTALLFRIVL. The Cytoplasmic portion of the chain corresponds to 143-147; the sequence is KRRLN. A helical transmembrane segment spans residues 148–168; that stretch reads WIQWASLLILFLSIVALTAGT. At 169 to 228 the chain is on the lumenal side; it reads KTLQHNLAGHGFHHDAFFSPSNSCLLFRSECPRKDNCTAKEWTFPEAKWNTTARVFSHIR. Asn204 carries an N-linked (GlcNAc...) asparagine glycan. The chain crosses the membrane as a helical span at residues 229–249; it reads LGMGHVLIIVQCFISSMANIY. The Cytoplasmic portion of the chain corresponds to 250–263; sequence NEKILKEGNQLAES. A helical transmembrane segment spans residues 264–284; it reads IFIQNSKLYFFGILFNGLTLG. Residues 285–303 are Lumenal-facing; it reads LQRSNRDQIKNCGFFYGHN. The chain crosses the membrane as a helical span at residues 304-324; it reads AFSVALIFVTAFQGLSVAFIL. Topologically, residues 325–330 are cytoplasmic; that stretch reads KFLDNM. The chain crosses the membrane as a helical span at residues 331–351; that stretch reads FHVLMAQVTTVIITTVSVLVF. Residues 352–354 are Lumenal-facing; that stretch reads DFR. The chain crosses the membrane as a helical span at residues 355–375; it reads PSLEFFLEAPSVLLSIFIYNA. The Cytoplasmic segment spans residues 376-424; sequence SKPQGPEYAPRQERIRDLSGNLWERSSGDGEELERLTKPKSDESDEDTF. A phosphoserine mark is found at Ser394, Ser416, and Ser419. The segment at 395–424 is disordered; that stretch reads GNLWERSSGDGEELERLTKPKSDESDEDTF. The segment covering 408-417 has biased composition (basic and acidic residues); it reads LERLTKPKSD.

The protein belongs to the nucleotide-sugar transporter family. SLC35A subfamily. Probably forms homooligomers and heterooligomers with SLC35A1, SLC35A2, SLC35A3 and SLC35A4.

It localises to the golgi apparatus membrane. The catalysed reaction is UMP(out) + UDP-alpha-D-glucuronate(in) = UMP(in) + UDP-alpha-D-glucuronate(out). It catalyses the reaction UMP(out) + UDP-N-acetyl-alpha-D-glucosamine(in) = UMP(in) + UDP-N-acetyl-alpha-D-glucosamine(out). It carries out the reaction UDP-N-acetyl-alpha-D-galactosamine(in) + UMP(out) = UDP-N-acetyl-alpha-D-galactosamine(out) + UMP(in). Functionally, probable UDP-sugar:UMP transmembrane antiporter involved in UDP-alpha-D-glucuronate/UDP-GlcA, UDP-GlcNAc/UDP-N-acetyl-alpha-D-glucosamine and UDP-N-acetyl-alpha-D-galactosamine/UDP-GalNAc transport from the cytosol to the lumen of the Golgi. The sequence is that of UDP-sugar transporter protein SLC35A5 from Pongo abelii (Sumatran orangutan).